The chain runs to 117 residues: Basic phospholipase A2 pseudexin A chain (117 aa).

7 disulfides stabilise this stretch: cysteine 11-cysteine 71, cysteine 27-cysteine 117, cysteine 29-cysteine 45, cysteine 44-cysteine 98, cysteine 51-cysteine 91, cysteine 60-cysteine 84, and cysteine 78-cysteine 89. Ca(2+) contacts are provided by tyrosine 28, glycine 30, and glycine 32. The active site involves histidine 48. Ca(2+) is bound at residue aspartate 49. Aspartate 92 is an active-site residue.

Belongs to the phospholipase A2 family. Group I subfamily. D49 sub-subfamily. Ca(2+) is required as a cofactor. Expressed by the venom gland.

The protein localises to the secreted. The enzyme catalyses a 1,2-diacyl-sn-glycero-3-phosphocholine + H2O = a 1-acyl-sn-glycero-3-phosphocholine + a fatty acid + H(+). Its function is as follows. PLA2 catalyzes the calcium-dependent hydrolysis of the 2-acyl groups in 3-sn-phosphoglycerides. The sequence is that of Basic phospholipase A2 pseudexin A chain from Pseudechis porphyriacus (Red-bellied black snake).